The chain runs to 1755 residues: Transposon Ty1-DR6 Gag-Pol polyprotein (1755 aa).

Composition is skewed to polar residues over residues 1 to 23 (MESQQLSQHSPISHGSACASVTS), 48 to 60 (TKANSQQTTTPAS), and 127 to 152 (QSQFPQYPSSVGTPLSTPSPESGNTF). 3 disordered regions span residues 1–93 (MESQ…MMTQ), 126–174 (PQSQ…PPPM), and 352–421 (GSRN…SKST). Low complexity predominate over residues 153-165 (TDSSSADSDMTST). The tract at residues 299-401 (NNGIHINNKV…NSKSKTARAH (103 aa)) is RNA-binding. A compositionally biased stretch (low complexity) spans 402 to 418 (NVSTSNNSPSTDNDSIS). Position 416 is a phosphoserine (serine 416). The For protease activity; shared with dimeric partner role is filled by aspartate 461. The tract at residues 583–640 (NVHTSESTRKYPYPFIHRMLAHANAQTIRYSLKNNTITYFNESDVDWSSAIDYQCPDC) is integrase-type zinc finger-like. Residues 660-835 (NSYEPFQYLH…AGLDISTLLP (176 aa)) form the Integrase catalytic domain. The Mg(2+) site is built by aspartate 671 and aspartate 736. Disordered regions lie at residues 956-1087 (SKAV…ETEK), 1092-1111 (RSPSIDASPPENNSSHNIVP), and 1130-1187 (DLPL…DNET). The segment covering 960–969 (SPTDSTPPST) has biased composition (low complexity). Residues 1005–1015 (STPQISNIEST) are compositionally biased toward polar residues. Residues 1038–1053 (ESSHASKSKDFRHSDS) are compositionally biased toward basic and acidic residues. 2 stretches are compositionally biased toward polar residues: residues 1054-1082 (YSENETNHTNVPISSTGGTNNKTVPQISD) and 1101-1111 (PENNSSHNIVP). Positions 1178-1212 (KKRSLEDNETEIKVSRDTWNTKNMRSLEPPRSKKR) match the Bipartite nuclear localization signal motif. The Reverse transcriptase Ty1/copia-type domain maps to 1338–1476 (NNYYITQLDI…DILGLEIKYQ (139 aa)). Mg(2+)-binding residues include aspartate 1346, aspartate 1427, aspartate 1428, aspartate 1610, glutamate 1652, and aspartate 1685. The RNase H Ty1/copia-type domain occupies 1610–1752 (DASYGNQPYY…IKTFKLLTNK (143 aa)).

In terms of assembly, the capsid protein forms a homotrimer, from which the VLPs are assembled. The protease is a homodimer, whose active site consists of two apposed aspartic acid residues. Post-translationally, initially, virus-like particles (VLPs) are composed of the structural unprocessed proteins Gag and Gag-Pol, and also contain the host initiator methionine tRNA (tRNA(i)-Met) which serves as a primer for minus-strand DNA synthesis, and a dimer of genomic Ty RNA. Processing of the polyproteins occurs within the particle and proceeds by an ordered pathway, called maturation. First, the protease (PR) is released by autocatalytic cleavage of the Gag-Pol polyprotein yielding capsid protein p45 and a Pol-p154 precursor protein. This cleavage is a prerequisite for subsequent processing of Pol-p154 at the remaining sites to release the mature structural and catalytic proteins. Maturation takes place prior to the RT reaction and is required to produce transposition-competent VLPs.

Its subcellular location is the cytoplasm. The protein resides in the nucleus. It carries out the reaction DNA(n) + a 2'-deoxyribonucleoside 5'-triphosphate = DNA(n+1) + diphosphate. The enzyme catalyses Endonucleolytic cleavage to 5'-phosphomonoester.. Capsid protein (CA) is the structural component of the virus-like particle (VLP), forming the shell that encapsulates the retrotransposons dimeric RNA genome. The particles are assembled from trimer-clustered units and there are holes in the capsid shells that allow for the diffusion of macromolecules. CA also has nucleocapsid-like chaperone activity, promoting primer tRNA(i)-Met annealing to the multipartite primer-binding site (PBS), dimerization of Ty1 RNA and initiation of reverse transcription. Its function is as follows. The aspartyl protease (PR) mediates the proteolytic cleavages of the Gag and Gag-Pol polyproteins after assembly of the VLP. Functionally, reverse transcriptase/ribonuclease H (RT) is a multifunctional enzyme that catalyzes the conversion of the retro-elements RNA genome into dsDNA within the VLP. The enzyme displays a DNA polymerase activity that can copy either DNA or RNA templates, and a ribonuclease H (RNase H) activity that cleaves the RNA strand of RNA-DNA heteroduplexes during plus-strand synthesis and hydrolyzes RNA primers. The conversion leads to a linear dsDNA copy of the retrotransposon that includes long terminal repeats (LTRs) at both ends. In terms of biological role, integrase (IN) targets the VLP to the nucleus, where a subparticle preintegration complex (PIC) containing at least integrase and the newly synthesized dsDNA copy of the retrotransposon must transit the nuclear membrane. Once in the nucleus, integrase performs the integration of the dsDNA into the host genome. The sequence is that of Transposon Ty1-DR6 Gag-Pol polyprotein (TY1B-DR6) from Saccharomyces cerevisiae (strain ATCC 204508 / S288c) (Baker's yeast).